Here is a 596-residue protein sequence, read N- to C-terminus: A-type ATP synthase subunit A (596 aa).

Residue 241–248 participates in ATP binding; sequence GPFGSGKT.

It belongs to the ATPase alpha/beta chains family. As to quaternary structure, has multiple subunits with at least A(3), B(3), C, D, E, F, H, I and proteolipid K(x).

The protein localises to the cell membrane. It catalyses the reaction ATP + H2O + 4 H(+)(in) = ADP + phosphate + 5 H(+)(out). In terms of biological role, component of the A-type ATP synthase that produces ATP from ADP in the presence of a proton gradient across the membrane. The A chain is the catalytic subunit. The polypeptide is A-type ATP synthase subunit A (Ignicoccus hospitalis (strain KIN4/I / DSM 18386 / JCM 14125)).